The following is a 551-amino-acid chain: Putative transport protein NTHI0043 (551 aa).

Helical transmembrane passes span 4-24 (IAITISLLALVAVIGLWIGHW), 28-48 (GVGLGIGGVLFGGIIVAHFTN), 65-85 (FGLILFVYTIGIQVGPGFFSS), 95-115 (AFAILIIVLGSIAVVLVHKIA), and 157-177 (VSYAMAYPFGICGILLAMWLI). RCK C-terminal domains lie at 191–275 (RFNA…IIGY) and 277–360 (VDAP…VIGN). 6 consecutive transmembrane segments (helical) span residues 370-390 (MLPVFIGIGLGVLVGSIPFYI), 402-424 (AGGPLVVALILARIGTIGKLYWF), 438-458 (IVLFLAVVGLKSGGSFFDTLV), 463-483 (LEWMGYGIFITFIPLMITGIL), 492-512 (YLTICGLLAGSMTDPPALAFA), and 529-549 (VYPLVMFLRIMSPQLLAVLLW).

The protein belongs to the AAE transporter (TC 2.A.81) family. YidE subfamily.

Its subcellular location is the cell membrane. This chain is Putative transport protein NTHI0043, found in Haemophilus influenzae (strain 86-028NP).